A 245-amino-acid polypeptide reads, in one-letter code: Putative MSV199 domain-containing protein 146R (245 aa).

The GIY-YIG domain maps to 2–97 (RKGYIYVIEN…NTLHGKLKNL (96 aa)).

The polypeptide is Putative MSV199 domain-containing protein 146R (Acheta domesticus (House cricket)).